A 127-amino-acid chain; its full sequence is Large ribosomal subunit protein bL12 (127 aa).

It belongs to the bacterial ribosomal protein bL12 family. Homodimer. Part of the ribosomal stalk of the 50S ribosomal subunit. Forms a multimeric L10(L12)X complex, where L10 forms an elongated spine to which 2 to 4 L12 dimers bind in a sequential fashion. Binds GTP-bound translation factors.

Forms part of the ribosomal stalk which helps the ribosome interact with GTP-bound translation factors. Is thus essential for accurate translation. This Leptospira interrogans serogroup Icterohaemorrhagiae serovar copenhageni (strain Fiocruz L1-130) protein is Large ribosomal subunit protein bL12.